Here is a 110-residue protein sequence, read N- to C-terminus: METIAKHRHARSSAQKVRLVADLIRGKKVSQALETLTYTNKKAAGLVKKVLESAIANAEHNDGADIDDLKVTKIFVDEGPTMKRIMPRAKGRADRILKRSSHITVVVSDR.

It belongs to the universal ribosomal protein uL22 family. In terms of assembly, part of the 50S ribosomal subunit.

Functionally, this protein binds specifically to 23S rRNA; its binding is stimulated by other ribosomal proteins, e.g. L4, L17, and L20. It is important during the early stages of 50S assembly. It makes multiple contacts with different domains of the 23S rRNA in the assembled 50S subunit and ribosome. In terms of biological role, the globular domain of the protein is located near the polypeptide exit tunnel on the outside of the subunit, while an extended beta-hairpin is found that lines the wall of the exit tunnel in the center of the 70S ribosome. This Photorhabdus laumondii subsp. laumondii (strain DSM 15139 / CIP 105565 / TT01) (Photorhabdus luminescens subsp. laumondii) protein is Large ribosomal subunit protein uL22.